The primary structure comprises 245 residues: Major prion protein (245 aa).

The N-terminal stretch at 1 to 22 (MANLGCWMLVVFVATWSDLGLC) is a signal peptide. The interval 23 to 222 (KKRPKPGGWN…ESQAYYQRGS (200 aa)) is interaction with GRB2, ERI3 and SYN1. The tract at residues 25-102 (RPKPGGWNTG…KPSKPKTSMK (78 aa)) is disordered. A run of 4 repeats spans residues 51–59 (PQGGGGWGQ), 60–67 (PHGGGWGQ), 68–75 (PHGGGWGQ), and 76–83 (PHGGGWGQ). Residues 51–83 (PQGGGGWGQPHGGGWGQPHGGGWGQPHGGGWGQ) are 4 X 8 AA tandem repeats of P-H-G-G-G-W-G-Q. Positions 52-87 (QGGGGWGQPHGGGWGQPHGGGWGQPHGGGWGQGGGT) are enriched in gly residues. Cu(2+)-binding residues include G54, G55, H61, G62, G63, H69, G70, G71, H77, G78, and G79. Over residues 90-101 (QWHKPSKPKTSM) the composition is skewed to basic residues. Residues C171 and C206 are joined by a disulfide bond. 2 N-linked (GlcNAc...) asparagine glycosylation sites follow: N173 and N189. A lipid anchor (GPI-anchor amidated serine) is attached at S222. Positions 223-245 (SMVLFSSPPVILLISFLIFLIVG) are cleaved as a propeptide — removed in mature form.

Belongs to the prion family. Monomer and homodimer. Has a tendency to aggregate into amyloid fibrils containing a cross-beta spine, formed by a steric zipper of superposed beta-strands. Soluble oligomers may represent an intermediate stage on the path to fibril formation. Copper binding may promote oligomerization. Interacts with GRB2, APP, ERI3/PRNPIP and SYN1. Mislocalized cytosolically exposed PrP interacts with MGRN1; this interaction alters MGRN1 subcellular location and causes lysosomal enlargement. Interacts with KIAA1191.

The protein resides in the cell membrane. Its subcellular location is the golgi apparatus. In terms of biological role, its primary physiological function is unclear. Has cytoprotective activity against internal or environmental stresses. May play a role in neuronal development and synaptic plasticity. May be required for neuronal myelin sheath maintenance. May play a role in iron uptake and iron homeostasis. Soluble oligomers are toxic to cultured neuroblastoma cells and induce apoptosis (in vitro). Association with GPC1 (via its heparan sulfate chains) targets PRNP to lipid rafts. Also provides Cu(2+) or Zn(2+) for the ascorbate-mediated GPC1 deaminase degradation of its heparan sulfate side chains. This chain is Major prion protein (PRNP), found in Cercopithecus diana (Diana monkey).